The chain runs to 486 residues: Cardiolipin synthase A (486 aa).

The next 2 helical transmembrane spans lie at 3 to 23 (TFYT…IAGV) and 38 to 58 (MAWL…YLSV). PLD phosphodiesterase domains are found at residues 219-246 (MDLR…VDPR) and 399-426 (EGGL…DMRS). Residues His-224, Lys-226, Asp-231, His-404, Lys-406, and Asp-411 contribute to the active site.

Belongs to the phospholipase D family. Cardiolipin synthase subfamily. ClsA sub-subfamily.

Its subcellular location is the cell inner membrane. The enzyme catalyses 2 a 1,2-diacyl-sn-glycero-3-phospho-(1'-sn-glycerol) = a cardiolipin + glycerol. Its function is as follows. Catalyzes the reversible phosphatidyl group transfer from one phosphatidylglycerol molecule to another to form cardiolipin (CL) (diphosphatidylglycerol) and glycerol. This is Cardiolipin synthase A from Salmonella gallinarum (strain 287/91 / NCTC 13346).